The sequence spans 576 residues: Probable proline--tRNA ligase, mitochondrial (576 aa).

The protein belongs to the class-II aminoacyl-tRNA synthetase family.

It is found in the mitochondrion. The catalysed reaction is tRNA(Pro) + L-proline + ATP = L-prolyl-tRNA(Pro) + AMP + diphosphate. This Saccharomyces cerevisiae (strain ATCC 204508 / S288c) (Baker's yeast) protein is Probable proline--tRNA ligase, mitochondrial (AIM10).